The primary structure comprises 151 residues: Protein INO4 (151 aa).

The 53-residue stretch at 45–97 (QIRINHVSSEKKRRELERAIFDELVAVVPDLQPQESRSELIIYLKSLSYLSWL) folds into the bHLH domain. The disordered stretch occupies residues 112-137 (HEAKTGSSSSSDPVQEQNGNIRDLVP). Residues 116-131 (TGSSSSSDPVQEQNGN) show a composition bias toward polar residues.

Efficient DNA binding requires dimerization with another bHLH protein.

The protein localises to the nucleus. Functionally, transcriptional activator of phospholipid synthetic genes (such as INO1, CHO1/PSS, CHO2/PEM1, OPI3/PEM2, etc.). This chain is Protein INO4 (INO4), found in Saccharomyces cerevisiae (strain ATCC 204508 / S288c) (Baker's yeast).